We begin with the raw amino-acid sequence, 1044 residues long: Elongation factor 3A (1044 aa).

At Ser-2 the chain carries N-acetylserine. The HEAT 1 repeat unit spans residues 5-42 (QQSIKVLEELFQKLSVATADNRHEIASEVASFLNGNII). Positions 42, 44, and 83 each coordinate ADP. HEAT repeat units lie at residues 86 to 123 (PYIV…AVNP), 125 to 162 (AIKA…AAKD), 166 to 203 (LRMP…TVDN), 205 to 241 (DIER…EVTP), 242 to 279 (ATLS…LVED), and 285 to 323 (PFLG…VGNV). N6,N6,N6-trimethyllysine is present on residues Lys-187 and Lys-196. A Glycyl lysine isopeptide (Lys-Gly) (interchain with G-Cter in ubiquitin) cross-link involves residue Lys-350. Residues Thr-392, His-396, and Glu-397 each coordinate ADP. In terms of domain architecture, ABC transporter 1 spans 426–641 (DEGEDLCNCE…CPAAKAYEEL (216 aa)). A Glycyl lysine isopeptide (Lys-Gly) (interchain with G-Cter in ubiquitin) cross-link involves residue Lys-636. Ser-642 carries the phosphoserine modification. Residues 667–993 (VKVTNMEFQY…AGPRIEKKED (327 aa)) enclose the ABC transporter 2 domain. Asn-703 contributes to the ADP binding site. Position 789 is an N6,N6,N6-trimethyllysine (Lys-789). The ADP site is built by Glu-922, Asn-925, and His-951. Residue Thr-972 is modified to Phosphothreonine. Ser-974 bears the Phosphoserine mark. The segment at 974-1044 (SGHNWVSGQG…DAYVSSDEEF (71 aa)) is disordered. Over residues 1007-1031 (GGKKKKKLSSAELRKKKKERMKKKK) the composition is skewed to basic residues. Phosphoserine is present on residues Ser-1039 and Ser-1040.

It belongs to the ABC transporter superfamily. ABCF family. EF3 subfamily. In terms of assembly, monomer. Interacts with elongation factor 1A (eEF1A). Interacts through its N-terminus with 18S rRNA. Associates with ribosomes; preferentially binds ribosomes in the post-translocational state (bearing a peptidyl-tRNA in the P-site) in the presence of ATP, suggesting that ATP hydrolysis is required for ribosome dissociation.

Its subcellular location is the cytoplasm. It is found in the cytosol. It carries out the reaction ATP + H2O = ADP + phosphate + H(+). The protein operates within protein biosynthesis; polypeptide chain elongation. With respect to regulation, inhibited by the translational inhibitors neomycin and alpha-sarcin, which suppress the ATPase activity. Ribosome-dependent ATPase that functions in cytoplasmic translation elongation. Required for the ATP-dependent release of deacylated tRNA from the ribosomal E-site during protein biosynthesis. Stimulates the eEF1A-dependent binding of aminoacyl-tRNA to the ribosomal A-site, which has reduced affinity for tRNA as long as the E-site is occupied. Assists translation termination by stimulating the release of nascent protein from the ribosome by release factors. In nutrient-replete conditions, occupies the space on the ribosome bound by GCN1 during amino acid starvation conditions, and therefore indirectly negatively regulates GCN2 kinase activity in replete conditions. The chain is Elongation factor 3A (YEF3) from Saccharomyces cerevisiae (strain ATCC 204508 / S288c) (Baker's yeast).